Consider the following 806-residue polypeptide: Protein bimA (806 aa).

TPR repeat units lie at residues 76–109 (LGCS…WTSR) and 127–160 (AAVL…NPFM). Disordered regions lie at residues 202-348 (VLPP…HRLG), 353-372 (TVSG…QGVG), and 401-460 (REVK…ASSK). Residues 224–237 (AGTTRSDSTSTHGS) are compositionally biased toward polar residues. The span at 246–257 (GSTVSVASSGTG) shows a compositional bias: low complexity. The interval 260–399 (LPREGMETPG…ISSTALGVKE (140 aa)) is bimA domain. Residues 328 to 348 (TKFESDEGHTERDAGMGHRLG) are compositionally biased toward basic and acidic residues. Residues 408 to 421 (TTGNKARTTTSSNV) are compositionally biased toward polar residues. Residues 432–445 (HAGEIHDGDSKEYR) show a composition bias toward basic and acidic residues. Residues 446–459 (GTSSTSNGSQNASS) show a composition bias toward low complexity. 6 TPR repeats span residues 513-546 (PWVL…APSR), 581-614 (PEAW…DPHF), 616-648 (YGFT…DSRH), 649-682 (YNAW…NPSN), 684-716 (VLIC…APHS), and 751-784 (ANVH…DPKA).

Belongs to the APC3/CDC27 family.

It localises to the nucleus. Its function is as follows. Required for the completion of mitosis in Aspergillus nidulans. The chain is Protein bimA (bimA) from Emericella nidulans (strain FGSC A4 / ATCC 38163 / CBS 112.46 / NRRL 194 / M139) (Aspergillus nidulans).